Consider the following 310-residue polypeptide: Methionyl-tRNA formyltransferase (310 aa).

A (6S)-5,6,7,8-tetrahydrofolate-binding site is contributed by 114-117; it reads SLLP.

It belongs to the Fmt family.

It catalyses the reaction L-methionyl-tRNA(fMet) + (6R)-10-formyltetrahydrofolate = N-formyl-L-methionyl-tRNA(fMet) + (6S)-5,6,7,8-tetrahydrofolate + H(+). In terms of biological role, attaches a formyl group to the free amino group of methionyl-tRNA(fMet). The formyl group appears to play a dual role in the initiator identity of N-formylmethionyl-tRNA by promoting its recognition by IF2 and preventing the misappropriation of this tRNA by the elongation apparatus. The sequence is that of Methionyl-tRNA formyltransferase from Granulibacter bethesdensis (strain ATCC BAA-1260 / CGDNIH1).